Consider the following 1188-residue polypeptide: AT-rich interactive domain-containing protein 5B (1188 aa).

A Glycyl lysine isopeptide (Lys-Gly) (interchain with G-Cter in SUMO2) cross-link involves residue K130. Residues R251 to K278 form a disordered region. A Phosphoserine modification is found at S264. Residues F265–C275 show a composition bias toward polar residues. Residues R319–K411 enclose the ARID domain. Position 337 is an N6,N6-dimethyllysine (K337). The disordered stretch occupies residues E413 to E614. 4 stretches are compositionally biased toward basic and acidic residues: residues I445–T459, S470–A484, V493–G504, and S526–D535. A Glycyl lysine isopeptide (Lys-Gly) (interchain with G-Cter in SUMO2) cross-link involves residue K446. Residues K494 and K496 each participate in a glycyl lysine isopeptide (Lys-Gly) (interchain with G-Cter in SUMO2) cross-link. Positions P594 to N609 are enriched in polar residues. Residues K767, K774, K803, K810, K893, K916, K920, and K935 each participate in a glycyl lysine isopeptide (Lys-Gly) (interchain with G-Cter in SUMO2) cross-link. Positions S958 to P978 are disordered. Glycyl lysine isopeptide (Lys-Gly) (interchain with G-Cter in SUMO2) cross-links involve residues K988, K1000, and K1013. The interval A1030 to S1066 is disordered. S1032 carries the post-translational modification Phosphoserine. Positions P1036–E1048 are enriched in basic and acidic residues. Residues K1055 and K1070 each participate in a glycyl lysine isopeptide (Lys-Gly) (interchain with G-Cter in SUMO2) cross-link. S1133 carries the post-translational modification Phosphoserine.

The protein belongs to the ARID5B family. Post-translationally, methylation at Lys-337 prevents DNA-binding. Demethylation by PHF2 promotes recruitment of the PHF2-ARID5B complex to promoters. Widely expressed. Expressed in lung, heart, small intestine, kidney, muscle and brain. Also expressed in spleen, thymus, endocrine organs and in uterus and testis.

It is found in the nucleus. Its function is as follows. Transcription coactivator that binds to the 5'-AATA[CT]-3' core sequence and plays a key role in adipogenesis and liver development. Acts by forming a complex with phosphorylated PHF2, which mediates demethylation at Lys-337, leading to target the PHF2-ARID5B complex to target promoters, where PHF2 mediates demethylation of dimethylated 'Lys-9' of histone H3 (H3K9me2), followed by transcription activation of target genes. The PHF2-ARID5B complex acts as a coactivator of HNF4A in liver. Required for adipogenesis: regulates triglyceride metabolism in adipocytes by regulating expression of adipogenic genes. Overexpression leads to induction of smooth muscle marker genes, suggesting that it may also act as a regulator of smooth muscle cell differentiation and proliferation. In Mus musculus (Mouse), this protein is AT-rich interactive domain-containing protein 5B (Arid5b).